Here is a 1671-residue protein sequence, read N- to C-terminus: Fatty acid synthase alpha subunit aflA (1671 aa).

Positions 40 to 60 (ITEEAPTEQPPLSTPPSLPQT) are disordered. Positions 47–58 (EQPPLSTPPSLP) are enriched in pro residues. Residues 75-153 (DVALSRVQIV…DANPTVQLGK (79 aa)) enclose the Carrier domain. Ser-113 carries the post-translational modification O-(pantetheine 4'-phosphoryl)serine. The interval 492-729 (GKTFLVTGAG…AMLLTPDFVA (238 aa)) is ketoreductase (KR) domain. One can recognise a Ketosynthase family 3 (KS3) domain in the interval 926-1428 (MEVLQEVAVE…QKGGQVVGVA (503 aa)). Cys-1113 serves as the catalytic For beta-ketoacyl synthase activity. Residues 1244 to 1270 (SMISVTSRPSSRSSTSSEVSDKSSLTS) show a composition bias toward low complexity. The segment at 1244 to 1288 (SMISVTSRPSSRSSTSSEVSDKSSLTSITSISNPAPRAQRARSTT) is disordered. Catalysis depends on for beta-ketoacyl synthase activity residues His-1313 and His-1354. The disordered stretch occupies residues 1497–1521 (PSTGQYRFRSDATPALDDDALPPPG). Position 1552 (Asp-1552) interacts with Mg(2+). Acetyl-CoA-binding positions include 1552–1554 (DLV), 1598–1608 (EAVFKCLQTHS), 1622–1625 (HGGN), and 1652–1654 (ISY). Ser-1653 provides a ligand contact to Mg(2+).

The protein belongs to the thiolase-like superfamily. Fungal fatty acid synthetase subunit alpha family. As to quaternary structure, [Alpha(6)beta(6)] hexamers of two multifunctional subunits (alpha and beta). Post-translationally, 4'-phosphopantetheine is transferred from CoA to a specific serine of the acyl carrier domain by the C-terminal PPT domain. This modification is essential for activity because fatty acids are bound in thioester linkage to the sulfhydryl of the prosthetic group.

It carries out the reaction acetyl-CoA + n malonyl-CoA + 2n NADPH + 4n H(+) = a long-chain-acyl-CoA + n CoA + n CO2 + 2n NADP(+).. The enzyme catalyses a fatty acyl-[ACP] + malonyl-[ACP] + H(+) = a 3-oxoacyl-[ACP] + holo-[ACP] + CO2. The catalysed reaction is a (3R)-hydroxyacyl-[ACP] + NADP(+) = a 3-oxoacyl-[ACP] + NADPH + H(+). It participates in mycotoxin biosynthesis; aflatoxin biosynthesis. Functionally, fatty acid synthase alpha subunit; part of the gene cluster that mediates the biosynthesis of aflatoxins, a group of polyketide-derived furanocoumarins, and part of the most toxic and carcinogenic compounds among the known mycotoxins. The four major aflatoxins produced by A.parasiticus are aflatoxin B1 (AFB1), aflatoxin B2 (AFB2), aflatoxin G1 (AFG1) and aflatoxin G2 (AFG2). Within the aflatoxin pathway, the fungal fatty acid synthase aflA/aflB provides the hexanoyl starter unit to the acyl-carrier protein (ACP) domain of the norsolorinic acid synthase to allow the first step of the pathway. The biosynthesis of aflatoxins begins with the norsolorinic acid synthase aflC that combines a hexanoyl starter unit produced by the fatty acid synthase aflA/aflB and 7 malonyl-CoA extender units to synthesize the precursor NOR. The second step is the conversion of NOR to averantin (AVN) and requires the norsolorinic acid ketoreductase aflD, which catalyzes the dehydration of norsolorinic acid to form (1'S)-averantin. The norsolorinic acid reductases aflE and aflF may also play a role in the conversion of NOR to AVN. The cytochrome P450 monooxygenase aflG then catalyzes the hydroxylation of AVN to 5'hydroxyaverantin (HAVN). The next step is performed by the 5'-hydroxyaverantin dehydrogenase aflH that transforms HAVN to 5'-oxoaverantin (OAVN) which is further converted to averufin (AVF) by aflK that plays a dual role in the pathway, as a 5'-oxoaverantin cyclase that mediates conversion of 5'-oxoaverantin, as well as a versicolorin B synthase in a later step in the pathway. The averufin oxidase aflI catalyzes the conversion of AVF to versiconal hemiacetal acetate (VHA). VHA is then the substrate for the versiconal hemiacetal acetate esterase aflJ to yield versiconal (VAL). Versicolorin B synthase aflK then converts VAL to versicolorin B (VERB) by closing the bisfuran ring of aflatoxin which is required for DNA-binding, thus giving to aflatoxin its activity as a mutagen. Then, the activity of the versicolorin B desaturase aflL leads to versicolorin A (VERA). A branch point starts from VERB since it can also be converted to dihydrodemethylsterigmatocystin (DMDHST), probably also by aflL, VERA being a precursor for aflatoxins B1 and G1, and DMDHST for aflatoxins B2 and G2. Next, the versicolorin reductase aflM and the cytochrome P450 monooxygenase aflN are involved in conversion of VERA to demethylsterigmatocystin (DMST). AflX and aflY seem also involved in this step, through probable aflX-mediated epoxide ring-opening step following versicolorin A oxidation and aflY-mediated Baeyer-Villiger oxidation required for the formation of the xanthone ring. The methyltransferase aflO then leads to the modification of DMST to sterigmatocystin (ST), and of DMDHST to dihydrosterigmatocystin (DHST). Both ST and DHST are then substrates of the O-methyltransferase aflP to yield O-methylsterigmatocystin (OMST) and dihydro-O-methylsterigmatocystin (DHOMST), respectively. Finally OMST is converted to aflatoxins B1 and G1, and DHOMST to aflatoxins B2 and G2, via the action of several enzymes including O-methylsterigmatocystin oxidoreductase aflQ, the cytochrome P450 monooxygenase aflU, but also the NADH-dependent flavin oxidoreductase nadA which is specifically required for the synthesis of AFG1. This Aspergillus parasiticus (strain ATCC 56775 / NRRL 5862 / SRRC 143 / SU-1) protein is Fatty acid synthase alpha subunit aflA.